We begin with the raw amino-acid sequence, 94 residues long: Protein SKIP34 (94 aa).

The segment at 1–27 (MCYGHNQSLSSRSSLRRRSHDGEDDSV) is disordered. Positions 23 to 61 (EDDSVVDDLRDRLAETEARLRRARAREAELSRRLEHMKR) form a coiled coil.

In terms of assembly, interacts with SPK1B/ASK2.

This Arabidopsis thaliana (Mouse-ear cress) protein is Protein SKIP34 (SKIP34).